The chain runs to 142 residues: Large ribosomal subunit protein uL13 (142 aa).

Belongs to the universal ribosomal protein uL13 family. As to quaternary structure, part of the 50S ribosomal subunit.

Functionally, this protein is one of the early assembly proteins of the 50S ribosomal subunit, although it is not seen to bind rRNA by itself. It is important during the early stages of 50S assembly. The sequence is that of Large ribosomal subunit protein uL13 from Methanosphaera stadtmanae (strain ATCC 43021 / DSM 3091 / JCM 11832 / MCB-3).